A 339-amino-acid chain; its full sequence is MLRLDKFKKYPLTFGATPIEHLPRLTAALGGKVQIYAKRDDCNSGLAMGGNKLRKLEYIVPDAIESNADTLVSIGGVQSNHTRMVAATAAKIGMKCVVVQESWVPHEDAVYDRVGNILMTRLMGADSRIVPDGFDIGIRKSWEDAIQSVKDAGGKPYGIPAGASVHKFGGLGYVGFAEEVRAQEAEMGIKFDYIIVCVVTGSTQAGMIVGFAADGRADRVIGIDASGTPEQTRTQVRQIVDNTAELVELGRKVRDDEIVILEDYAYPAYGVPSAETNEAIRLAARTEAMITDPVYEGKSMQGMIDLVKKGYFPEGSKVLYAHLGGAPAINGYSYTYRNG.

Residue Lys52 is modified to N6-(pyridoxal phosphate)lysine. Ser79 serves as the catalytic Nucleophile.

This sequence belongs to the ACC deaminase/D-cysteine desulfhydrase family. Homotrimer. Pyridoxal 5'-phosphate serves as cofactor.

It catalyses the reaction 1-aminocyclopropane-1-carboxylate + H2O = 2-oxobutanoate + NH4(+). Functionally, catalyzes a cyclopropane ring-opening reaction, the irreversible conversion of 1-aminocyclopropane-1-carboxylate (ACC) to ammonia and alpha-ketobutyrate. Allows growth on ACC as a nitrogen source. The polypeptide is 1-aminocyclopropane-1-carboxylate deaminase (Bradyrhizobium sp. (strain BTAi1 / ATCC BAA-1182)).